The primary structure comprises 588 residues: Mitochondrial tRNA methylthiotransferase CDK5RAP1 (588 aa).

Residues 1–30 (MHPLRCVLQVQRLSAPFTSMCWVLLRTCRA) constitute a mitochondrion transit peptide. Disordered regions lie at residues 33–53 (SVSSTPCPSPEAKSSEAQKDF) and 70–91 (ASVPQEKPSSPEVEDPPPYLSG). An MTTase N-terminal domain is found at 99 to 219 (RKVYLETYGC…LPRLLAVVES (121 aa)). [4Fe-4S] cluster contacts are provided by C108, C144, C182, C257, C261, and C264. Residues 243 to 498 (SPSATSAFVS…TVFREEASKA (256 aa)) enclose the Radical SAM core domain. Residues 500–575 (KTSVGCSQLV…SQTLKGHILC (76 aa)) form the TRAM domain.

Belongs to the methylthiotransferase family. MiaB subfamily. In terms of assembly, interacts with CDK5R1 (p35 form). CDK5RAP1, CDK5RAP2 and CDK5RAP3 show competitive binding to CDK5R1. Probably forms a complex with CDK5R1 and CDK5. [4Fe-4S] cluster serves as cofactor. As to expression, expressed in brain, liver, skeletal muscle and heart.

The protein resides in the mitochondrion. The catalysed reaction is N(6)-dimethylallyladenosine(37) in tRNA + (sulfur carrier)-SH + AH2 + 2 S-adenosyl-L-methionine = 2-methylsulfanyl-N(6)-dimethylallyladenosine(37) in tRNA + (sulfur carrier)-H + 5'-deoxyadenosine + L-methionine + A + S-adenosyl-L-homocysteine + 2 H(+). Its function is as follows. Methylthiotransferase that catalyzes the conversion of N6-(dimethylallyl)adenosine (i(6)A) to 2-methylthio-N6-(dimethylallyl)adenosine (ms(2)i(6)A) at position 37 (adjacent to the 3'-end of the anticodon) of four mitochondrial DNA-encoded tRNAs (Ser(UCN), Phe, Tyr and Trp). Essential for efficient and highly accurate protein translation by the ribosome. Specifically inhibits CDK5 activation by CDK5R1. Essential for efficient mitochondrial protein synthesis and respiratory chain. This chain is Mitochondrial tRNA methylthiotransferase CDK5RAP1, found in Mus musculus (Mouse).